Reading from the N-terminus, the 257-residue chain is Thiazole synthase (257 aa).

The Schiff-base intermediate with DXP role is filled by K100. Residues G161, 187–188 (AG), and 209–210 (NT) each bind 1-deoxy-D-xylulose 5-phosphate.

The protein belongs to the ThiG family. In terms of assembly, homotetramer. Forms heterodimers with either ThiH or ThiS.

The protein resides in the cytoplasm. The catalysed reaction is [ThiS sulfur-carrier protein]-C-terminal-Gly-aminoethanethioate + 2-iminoacetate + 1-deoxy-D-xylulose 5-phosphate = [ThiS sulfur-carrier protein]-C-terminal Gly-Gly + 2-[(2R,5Z)-2-carboxy-4-methylthiazol-5(2H)-ylidene]ethyl phosphate + 2 H2O + H(+). It participates in cofactor biosynthesis; thiamine diphosphate biosynthesis. Functionally, catalyzes the rearrangement of 1-deoxy-D-xylulose 5-phosphate (DXP) to produce the thiazole phosphate moiety of thiamine. Sulfur is provided by the thiocarboxylate moiety of the carrier protein ThiS. In vitro, sulfur can be provided by H(2)S. The sequence is that of Thiazole synthase from Pelagibacter ubique (strain HTCC1062).